The sequence spans 228 residues: 2,3-bisphosphoglycerate-dependent phosphoglycerate mutase (228 aa).

Residues 7–14, 20–21, Arg-59, 86–89, Lys-97, 113–114, and 182–183 contribute to the substrate site; these read RHGESAWN, TG, ERHY, RR, and GN. His-8 (tele-phosphohistidine intermediate) is an active-site residue. Residue Glu-86 is the Proton donor/acceptor of the active site.

Belongs to the phosphoglycerate mutase family. BPG-dependent PGAM subfamily.

The catalysed reaction is (2R)-2-phosphoglycerate = (2R)-3-phosphoglycerate. It participates in carbohydrate degradation; glycolysis; pyruvate from D-glyceraldehyde 3-phosphate: step 3/5. Its function is as follows. Catalyzes the interconversion of 2-phosphoglycerate and 3-phosphoglycerate. In Fusobacterium nucleatum subsp. nucleatum (strain ATCC 25586 / DSM 15643 / BCRC 10681 / CIP 101130 / JCM 8532 / KCTC 2640 / LMG 13131 / VPI 4355), this protein is 2,3-bisphosphoglycerate-dependent phosphoglycerate mutase.